A 1059-amino-acid polypeptide reads, in one-letter code: Ubiquitin carboxyl-terminal hydrolase 36 (1059 aa).

Disordered stretches follow at residues 24–49 (VGNG…DSEM) and 94–148 (SNNN…KPKR). Residues 94-123 (SNNNNSSSCNGSNFGNSKVVGANGHDNGNN) show a composition bias toward low complexity. A compositionally biased stretch (polar residues) spans 130–139 (QSESTQSGPS). The 309-residue stretch at 171–479 (TGMINVGNTC…NAYIMFYELD (309 aa)) folds into the USP domain. The Nucleophile role is filled by C180. The active-site Proton acceptor is the H438. Residues 505–673 (TVSSSSPTHT…KTPLKSSVKT (169 aa)) are disordered. Phosphoserine is present on residues S508 and S510. The span at 528 to 539 (GYSNGHATGSSN) shows a compositional bias: polar residues. Composition is skewed to low complexity over residues 540–560 (AQKT…NGLQ), 592–611 (NGNK…KSVN), and 633–647 (ATAT…RPTA). A compositionally biased stretch (basic and acidic residues) spans 655 to 664 (MTEDSSDKPK). T673 and T682 each carry phosphothreonine. 3 disordered regions span residues 687-893 (LVPY…EAST), 926-998 (KELV…RYHN), and 1012-1059 (KYNR…QSSS). 2 positions are modified to phosphoserine: S692 and S694. Composition is skewed to low complexity over residues 729–739 (TKTNGGSLTNG) and 752–765 (SSSS…ASAA). The residue at position 766 (S766) is a Phosphoserine. Acidic residues predominate over residues 766–776 (SDDEDADEEEE). A compositionally biased stretch (polar residues) spans 779–795 (KLTNGWQPQKQSQSLTQ). The span at 799-808 (PPSPKTPPSP) shows a compositional bias: pro residues. A Phosphoserine modification is found at S801. Phosphothreonine is present on T804. S807 is subject to Phosphoserine. A compositionally biased stretch (acidic residues) spans 825–839 (DNEDEDDDDDEDEEE). Polar residues-rich tracts occupy residues 842–862 (QVVS…STTP) and 876–893 (KSQQ…EAST). T846 and T861 each carry phosphothreonine. Basic and acidic residues predominate over residues 926-940 (KELVAEAREQRQHDH). The segment covering 1048 to 1059 (QQQQQQSQQSSS) has biased composition (low complexity).

Belongs to the peptidase C19 family. As to quaternary structure, interacts with atms/PAF1, but not with CycT.

The protein resides in the nucleus. The protein localises to the nucleolus. It catalyses the reaction Thiol-dependent hydrolysis of ester, thioester, amide, peptide and isopeptide bonds formed by the C-terminal Gly of ubiquitin (a 76-residue protein attached to proteins as an intracellular targeting signal).. Required for maintaining multiple types of adult stem cells, including male and female germline, epithelial follicle cell and intestinal stem cells. May function as a transcriptional repressor by continually deubiquiting histone H2B at the promoters of genes critical for cellular differentiation, thereby preventing histone H3 'Lys-4' trimethylation (H3K4). Controls selective autophagy activation by ubiquitinated proteins. The protein is Ubiquitin carboxyl-terminal hydrolase 36 (Usp36) of Drosophila pseudoobscura pseudoobscura (Fruit fly).